The sequence spans 289 residues: Pantothenate synthetase (289 aa).

Met33–His40 serves as a coordination point for ATP. Residue His40 is the Proton donor of the active site. Gln64 serves as a coordination point for (R)-pantoate. Beta-alanine is bound at residue Gln64. Gly155 to Asp158 serves as a coordination point for ATP. Gln161 contacts (R)-pantoate. ATP-binding positions include Ala184 and Leu192–Arg195.

This sequence belongs to the pantothenate synthetase family. In terms of assembly, homodimer.

The protein localises to the cytoplasm. It carries out the reaction (R)-pantoate + beta-alanine + ATP = (R)-pantothenate + AMP + diphosphate + H(+). The protein operates within cofactor biosynthesis; (R)-pantothenate biosynthesis; (R)-pantothenate from (R)-pantoate and beta-alanine: step 1/1. Functionally, catalyzes the condensation of pantoate with beta-alanine in an ATP-dependent reaction via a pantoyl-adenylate intermediate. The chain is Pantothenate synthetase from Acidovorax sp. (strain JS42).